The following is a 1198-amino-acid chain: Tetratricopeptide repeat protein 17 (1198 aa).

The TPR 1 repeat unit spans residues 295–328 (FTSYYTLGNIYAMLGEYNHSVLCYDHALQAKPGF). The stretch at 340–382 (CQQKLEQKLEAQHRSLQRTLNELKEYQKQHDHYLRQQEILEKH) forms a coiled coil. TPR repeat units lie at residues 619–652 (WLILNEAGLYWRAVGNSTFAIACLQRALNLAPVQ) and 689–722 (PLTFLSLGNAYLALKNVSGALEAFRQALKLSTKC). Disordered stretches follow at residues 774–793 (LDAAAEEPSGHGADEDPVLS) and 902–954 (VKKP…YQSL). A compositionally biased stretch (basic residues) spans 902-914 (VKKPKGDHKKPPG). TPR repeat units follow at residues 1071–1105 (SWVLSSMAALYWRVKGQGKKAIDCLRQALHYAPHQ), 1108–1141 (DVPLISLANILHNAKLWNDAVIVATMAVEIAPHF), and 1142–1175 (AVNHFTLGNVYVAMEEFEKALVWYESTLKLQPEF).

Belongs to the TTC17 family. As to quaternary structure, interacts with CATIP.

The protein localises to the cytoplasm. It is found in the cell membrane. Its subcellular location is the cytoskeleton. Functionally, plays a role in primary ciliogenesis by modulating actin polymerization. The protein is Tetratricopeptide repeat protein 17 (Ttc17) of Mus musculus (Mouse).